The chain runs to 518 residues: MFS-type transporter cnsO (518 aa).

The segment covering methionine 1–threonine 13 has biased composition (polar residues). Residues methionine 1 to threonine 24 form a disordered region. 9 helical membrane passes run leucine 99–leucine 119, valine 122–threonine 142, leucine 156–tryptophan 176, alanine 187–valine 207, tryptophan 221–leucine 241, phenylalanine 298–leucine 318, valine 334–serine 354, leucine 362–valine 382, and tyrosine 392–tryptophan 412. An N-linked (GlcNAc...) asparagine glycan is attached at asparagine 416. The next 2 helical transmembrane spans lie at isoleucine 427–isoleucine 447 and proline 455–isoleucine 475.

It belongs to the major facilitator superfamily.

The protein resides in the cell membrane. Functionally, MFS-type transporter; part of the gene cluster that mediates the biosynthesis of communesins, a prominent class of indole alkaloids with great potential as pharmaceuticals. With the MFS transporter cnsL, is most likely responsible for cummunesins secretion and thereby may contribute to intrinsic resistance. In Penicillium expansum (Blue mold rot fungus), this protein is MFS-type transporter cnsO.